The primary structure comprises 84 residues: Cell division topological specificity factor (84 aa).

This sequence belongs to the MinE family.

Functionally, prevents the cell division inhibition by proteins MinC and MinD at internal division sites while permitting inhibition at polar sites. This ensures cell division at the proper site by restricting the formation of a division septum at the midpoint of the long axis of the cell. This is Cell division topological specificity factor from Ralstonia nicotianae (strain ATCC BAA-1114 / GMI1000) (Ralstonia solanacearum).